Consider the following 511-residue polypeptide: ATP synthase subunit beta, mitochondrial (511 aa).

Residues 1–33 (MVLPRLYTATSRAAFKAAKQSAPLLSTSWKRCM) constitute a mitochondrion transit peptide. Residue threonine 112 is modified to Phosphothreonine. Residue 190 to 197 (GGAGVGKT) participates in ATP binding. Threonine 237 carries the phosphothreonine modification. Serine 373 carries the post-translational modification Phosphoserine.

It belongs to the ATPase alpha/beta chains family. As to quaternary structure, F-type ATPases have 2 components, CF(1) - the catalytic core - and CF(0) - the membrane proton channel. CF(1) has five subunits: alpha(3), beta(3), gamma(1), delta(1), epsilon(1). CF(0) has three main subunits: a, b and c.

The protein resides in the mitochondrion. It localises to the mitochondrion inner membrane. It catalyses the reaction ATP + H2O + 4 H(+)(in) = ADP + phosphate + 5 H(+)(out). In terms of biological role, mitochondrial membrane ATP synthase (F(1)F(0) ATP synthase or Complex V) produces ATP from ADP in the presence of a proton gradient across the membrane which is generated by electron transport complexes of the respiratory chain. F-type ATPases consist of two structural domains, F(1) - containing the extramembraneous catalytic core, and F(0) - containing the membrane proton channel, linked together by a central stalk and a peripheral stalk. During catalysis, ATP synthesis in the catalytic domain of F(1) is coupled via a rotary mechanism of the central stalk subunits to proton translocation. Subunits alpha and beta form the catalytic core in F(1). Rotation of the central stalk against the surrounding alpha(3)beta(3) subunits leads to hydrolysis of ATP in three separate catalytic sites on the beta subunits. The protein is ATP synthase subunit beta, mitochondrial (ATP2) of Saccharomyces cerevisiae (strain ATCC 204508 / S288c) (Baker's yeast).